The sequence spans 232 residues: Small ribosomal subunit protein uS3 (232 aa).

A KH type-2 domain is found at 39–107 (VRRFLEQRLK…PVHVNIEEVR (69 aa)).

The protein belongs to the universal ribosomal protein uS3 family. As to quaternary structure, part of the 30S ribosomal subunit. Forms a tight complex with proteins S10 and S14.

Binds the lower part of the 30S subunit head. Binds mRNA in the 70S ribosome, positioning it for translation. This Chromohalobacter salexigens (strain ATCC BAA-138 / DSM 3043 / CIP 106854 / NCIMB 13768 / 1H11) protein is Small ribosomal subunit protein uS3.